The chain runs to 209 residues: ATP phosphoribosyltransferase (209 aa).

It belongs to the ATP phosphoribosyltransferase family. Short subfamily. As to quaternary structure, heteromultimer composed of HisG and HisZ subunits.

The protein resides in the cytoplasm. The catalysed reaction is 1-(5-phospho-beta-D-ribosyl)-ATP + diphosphate = 5-phospho-alpha-D-ribose 1-diphosphate + ATP. It functions in the pathway amino-acid biosynthesis; L-histidine biosynthesis; L-histidine from 5-phospho-alpha-D-ribose 1-diphosphate: step 1/9. Functionally, catalyzes the condensation of ATP and 5-phosphoribose 1-diphosphate to form N'-(5'-phosphoribosyl)-ATP (PR-ATP). Has a crucial role in the pathway because the rate of histidine biosynthesis seems to be controlled primarily by regulation of HisG enzymatic activity. The protein is ATP phosphoribosyltransferase of Sulfurimonas denitrificans (strain ATCC 33889 / DSM 1251) (Thiomicrospira denitrificans (strain ATCC 33889 / DSM 1251)).